Consider the following 299-residue polypeptide: Probable lipid kinase YegS (299 aa).

A DAGKc domain is found at 2–133 (AEFPASLLIL…IDMAQVNKQT (132 aa)). Residues Thr40, 66–72 (GDGTINE), and Thr95 contribute to the ATP site. Residues Leu215, Asp218, and Leu220 each coordinate Mg(2+). Glu271 functions as the Proton acceptor in the catalytic mechanism.

Belongs to the diacylglycerol/lipid kinase family. YegS lipid kinase subfamily. Mg(2+) serves as cofactor. Ca(2+) is required as a cofactor.

The protein localises to the cytoplasm. Probably phosphorylates lipids; the in vivo substrate is unknown. The polypeptide is Probable lipid kinase YegS (Escherichia coli (strain K12 / MC4100 / BW2952)).